Here is a 173-residue protein sequence, read N- to C-terminus: Ribulose bisphosphate carboxylase small subunit, chloroplastic 1 (173 aa).

The N-terminal 49 residues, 1–49, are a transit peptide targeting the chloroplast; sequence MASIPATVATVAQANMVAPFTGLKANAAFPVTKKVNDFSTLPSNGGRVQ.

It belongs to the RuBisCO small chain family. As to quaternary structure, heterohexadecamer of 8 large and 8 small subunits.

It is found in the plastid. Its subcellular location is the chloroplast. Functionally, ruBisCO catalyzes two reactions: the carboxylation of D-ribulose 1,5-bisphosphate, the primary event in carbon dioxide fixation, as well as the oxidative fragmentation of the pentose substrate. Both reactions occur simultaneously and in competition at the same active site. Although the small subunit is not catalytic it is essential for maximal activity. The protein is Ribulose bisphosphate carboxylase small subunit, chloroplastic 1 of Flaveria pringlei.